The chain runs to 192 residues: Capsid protein (192 aa).

The tract at residues Met-1–Pro-30 is disordered. Polar residues predominate over residues Pro-12–Pro-30.

This sequence belongs to the tymoviruses capsid protein family.

Its subcellular location is the virion. Its function is as follows. Self-assembles to form a T=3 icosahedral capsid composed of 180 copies of the capsid protein. The capsid encapsulates the single-stranded RNA genome. This Ononis protein is Capsid protein.